The chain runs to 113 residues: Large ribosomal subunit protein eL34 (113 aa).

Belongs to the eukaryotic ribosomal protein eL34 family.

The chain is Large ribosomal subunit protein eL34 from Methanopyrus kandleri (strain AV19 / DSM 6324 / JCM 9639 / NBRC 100938).